A 100-amino-acid chain; its full sequence is Urease subunit gamma (100 aa).

It belongs to the urease gamma subunit family. In terms of assembly, heterotrimer of UreA (gamma), UreB (beta) and UreC (alpha) subunits. Three heterotrimers associate to form the active enzyme.

The protein localises to the cytoplasm. The enzyme catalyses urea + 2 H2O + H(+) = hydrogencarbonate + 2 NH4(+). The protein operates within nitrogen metabolism; urea degradation; CO(2) and NH(3) from urea (urease route): step 1/1. In Frankia alni (strain DSM 45986 / CECT 9034 / ACN14a), this protein is Urease subunit gamma.